Reading from the N-terminus, the 959-residue chain is Translation initiation factor IF-2 (959 aa).

Residues 1–10 (MSDKTNDDKT) are compositionally biased toward basic and acidic residues. A disordered region spans residues 1-374 (MSDKTNDDKT…SQMQETREKI (374 aa)). The span at 27–37 (EQSTVRQNFSH) shows a compositional bias: polar residues. 2 stretches are compositionally biased toward low complexity: residues 63 to 118 (AAAA…VTKP) and 128 to 138 (QRPGGQQAQRP). Basic and acidic residues-rich tracts occupy residues 154-225 (SEMD…EAAK) and 232-241 (ARSERRDDAR). A compositionally biased stretch (low complexity) spans 246-284 (GARPQQAGRPQGGRPQPAGRPQQGSPRPAPIIADAAPIA). Residues 318–333 (PEVRAPKVVKGEDDRR) show a composition bias toward basic and acidic residues. A tr-type G domain is found at 457-626 (SRPPVVTIMG…LLQAEMLDLK (170 aa)). The interval 466 to 473 (GHVDHGKT) is G1. Residue 466–473 (GHVDHGKT) participates in GTP binding. A G2 region spans residues 491–495 (GITQH). The segment at 512-515 (DTPG) is G3. GTP-binding positions include 512-516 (DTPGH) and 566-569 (NKID). A G4 region spans residues 566 to 569 (NKID). The interval 602–604 (SAK) is G5.

This sequence belongs to the TRAFAC class translation factor GTPase superfamily. Classic translation factor GTPase family. IF-2 subfamily.

Its subcellular location is the cytoplasm. Its function is as follows. One of the essential components for the initiation of protein synthesis. Protects formylmethionyl-tRNA from spontaneous hydrolysis and promotes its binding to the 30S ribosomal subunits. Also involved in the hydrolysis of GTP during the formation of the 70S ribosomal complex. In Brucella abortus (strain 2308), this protein is Translation initiation factor IF-2.